The sequence spans 679 residues: Methionine--tRNA ligase (679 aa).

A 'HIGH' region motif is present at residues 14–24; the sequence is PYANGSIHLGH. Zn(2+) is bound by residues C145, C148, C158, and C161. The short motif at 331 to 335 is the 'KMSKS' region element; the sequence is KMSKS. K334 lines the ATP pocket. Positions 577-679 constitute a tRNA-binding domain; that stretch reads AFAAVDLRIA…SGAKPGQRVK (103 aa).

Belongs to the class-I aminoacyl-tRNA synthetase family. MetG type 1 subfamily. In terms of assembly, homodimer. The cofactor is Zn(2+).

The protein resides in the cytoplasm. It catalyses the reaction tRNA(Met) + L-methionine + ATP = L-methionyl-tRNA(Met) + AMP + diphosphate. In terms of biological role, is required not only for elongation of protein synthesis but also for the initiation of all mRNA translation through initiator tRNA(fMet) aminoacylation. This Pseudomonas paraeruginosa (strain DSM 24068 / PA7) (Pseudomonas aeruginosa (strain PA7)) protein is Methionine--tRNA ligase.